A 245-amino-acid chain; its full sequence is Uridylate kinase (245 aa).

Residue 20–23 participates in ATP binding; it reads KLSG. Residue G60 participates in UMP binding. The ATP site is built by G61 and R65. UMP-binding positions include D80 and 141-148; that span reads AGLPYFST. The ATP site is built by Y175 and D178.

This sequence belongs to the UMP kinase family. Homohexamer.

The protein resides in the cytoplasm. The enzyme catalyses UMP + ATP = UDP + ADP. The protein operates within pyrimidine metabolism; CTP biosynthesis via de novo pathway; UDP from UMP (UMPK route): step 1/1. Inhibited by UTP. Functionally, catalyzes the reversible phosphorylation of UMP to UDP. The protein is Uridylate kinase of Arthrobacter sp. (strain FB24).